A 92-amino-acid polypeptide reads, in one-letter code: Small ribosomal subunit protein bS20 (92 aa).

This sequence belongs to the bacterial ribosomal protein bS20 family.

Binds directly to 16S ribosomal RNA. This Rickettsia conorii (strain ATCC VR-613 / Malish 7) protein is Small ribosomal subunit protein bS20.